Consider the following 505-residue polypeptide: ATP synthase subunit alpha (505 aa).

170–177 serves as a coordination point for ATP; the sequence is GDRQTGKT.

The protein belongs to the ATPase alpha/beta chains family. F-type ATPases have 2 components, CF(1) - the catalytic core - and CF(0) - the membrane proton channel. CF(1) has five subunits: alpha(3), beta(3), gamma(1), delta(1), epsilon(1). CF(0) has four main subunits: a(1), b(1), b'(1) and c(9-12).

Its subcellular location is the cellular thylakoid membrane. The catalysed reaction is ATP + H2O + 4 H(+)(in) = ADP + phosphate + 5 H(+)(out). Its function is as follows. Produces ATP from ADP in the presence of a proton gradient across the membrane. The alpha chain is a regulatory subunit. The polypeptide is ATP synthase subunit alpha (Prochlorococcus marinus (strain MIT 9313)).